Consider the following 345-residue polypeptide: Quinolinate synthase (345 aa).

Iminosuccinate contacts are provided by H69 and S87. C132 is a [4Fe-4S] cluster binding site. Residues 158–160 (YVN) and S175 each bind iminosuccinate. C217 lines the [4Fe-4S] cluster pocket. Iminosuccinate is bound by residues 243-245 (HPE) and T260. A [4Fe-4S] cluster-binding site is contributed by C303.

This sequence belongs to the quinolinate synthase family. Type 2 subfamily. The cofactor is [4Fe-4S] cluster.

It localises to the cytoplasm. The catalysed reaction is iminosuccinate + dihydroxyacetone phosphate = quinolinate + phosphate + 2 H2O + H(+). The protein operates within cofactor biosynthesis; NAD(+) biosynthesis; quinolinate from iminoaspartate: step 1/1. Its function is as follows. Catalyzes the condensation of iminoaspartate with dihydroxyacetone phosphate to form quinolinate. This is Quinolinate synthase from Agrobacterium fabrum (strain C58 / ATCC 33970) (Agrobacterium tumefaciens (strain C58)).